We begin with the raw amino-acid sequence, 333 residues long: Gamma-D-glutamyl-L-lysine dipeptidyl-peptidase (333 aa).

Residues 1–23 (MKKVGTAFLTTLFIFSSFTSAHA) form the signal peptide. Substrate contacts are provided by residues Glu-83, Tyr-118, 237 to 239 (DCS), and 256 to 257 (DS). The NlpC/P60 domain maps to 208-332 (TPAADDLINT…EEYAGARRYL (125 aa)). Cys-238 (nucleophile) is an active-site residue. His-291 acts as the Proton acceptor in catalysis. Residue His-303 is part of the active site.

This sequence belongs to the peptidase C40 family. As to quaternary structure, monomer in solution.

The enzyme catalyses The enzyme releases L-Ala-gamma-D-Glu dipeptides from cell wall peptides via cleavage of an L-Ala-gamma-D-Glu-|-L-Lys bond.. It participates in cell wall degradation; peptidoglycan degradation. Functionally, specifically hydrolyzes gamma-D-glutamyl-L-lysine bonds in murein peptides, releasing L-Ala-D-Glu. This is Gamma-D-glutamyl-L-lysine dipeptidyl-peptidase from Bacillus cereus (strain ATCC 10987 / NRS 248).